The chain runs to 53 residues: UPF0391 membrane protein gsr2640 (53 aa).

Helical transmembrane passes span 4-24 (LLWL…GGVV) and 32-49 (WFLI…FVTG).

Belongs to the UPF0391 family.

It localises to the cell membrane. This chain is UPF0391 membrane protein gsr2640, found in Gloeobacter violaceus (strain ATCC 29082 / PCC 7421).